The sequence spans 512 residues: ATP synthase subunit alpha (512 aa).

Glycine 169–threonine 176 contacts ATP.

It belongs to the ATPase alpha/beta chains family. As to quaternary structure, F-type ATPases have 2 components, CF(1) - the catalytic core - and CF(0) - the membrane proton channel. CF(1) has five subunits: alpha(3), beta(3), gamma(1), delta(1), epsilon(1). CF(0) has three main subunits: a(1), b(2) and c(9-12). The alpha and beta chains form an alternating ring which encloses part of the gamma chain. CF(1) is attached to CF(0) by a central stalk formed by the gamma and epsilon chains, while a peripheral stalk is formed by the delta and b chains.

It is found in the cell membrane. It carries out the reaction ATP + H2O + 4 H(+)(in) = ADP + phosphate + 5 H(+)(out). Produces ATP from ADP in the presence of a proton gradient across the membrane. The alpha chain is a regulatory subunit. In Buchnera aphidicola subsp. Acyrthosiphon pisum (strain 5A), this protein is ATP synthase subunit alpha.